The following is a 587-amino-acid chain: Aspartate--tRNA ligase (587 aa).

Glutamate 173 lines the L-aspartate pocket. The segment at 197 to 200 (QTLK) is aspartate. Arginine 219 is an L-aspartate binding site. ATP contacts are provided by residues 219–221 (RDE) and glutamine 228. Histidine 446 serves as a coordination point for L-aspartate. Glutamate 480 lines the ATP pocket. Residue arginine 487 coordinates L-aspartate. 532–535 (GLDR) lines the ATP pocket.

The protein belongs to the class-II aminoacyl-tRNA synthetase family. Type 1 subfamily. Homodimer.

The protein resides in the cytoplasm. It carries out the reaction tRNA(Asp) + L-aspartate + ATP = L-aspartyl-tRNA(Asp) + AMP + diphosphate. Functionally, catalyzes the attachment of L-aspartate to tRNA(Asp) in a two-step reaction: L-aspartate is first activated by ATP to form Asp-AMP and then transferred to the acceptor end of tRNA(Asp). The polypeptide is Aspartate--tRNA ligase (Phocaeicola vulgatus (strain ATCC 8482 / DSM 1447 / JCM 5826 / CCUG 4940 / NBRC 14291 / NCTC 11154) (Bacteroides vulgatus)).